The primary structure comprises 828 residues: Beta-galactosidase 13 (828 aa).

Positions 1–23 (MKTTMAAAATCLVALLVVVLAEA) are cleaved as a signal peptide. A glycan (N-linked (GlcNAc...) asparagine) is linked at N157. The active-site Proton donor is the E187. 2 N-linked (GlcNAc...) asparagine glycosylation sites follow: N198 and N249. The active-site Nucleophile is E259. Residues N260, N362, N366, N392, N502, N578, N586, and N615 are each glycosylated (N-linked (GlcNAc...) asparagine). Residues 746 to 828 (AEVGDAITLS…SGVLTVQASC (83 aa)) enclose the SUEL-type lectin domain.

The protein belongs to the glycosyl hydrolase 35 family.

The protein localises to the secreted. It localises to the extracellular space. Its subcellular location is the apoplast. The catalysed reaction is Hydrolysis of terminal non-reducing beta-D-galactose residues in beta-D-galactosides.. The polypeptide is Beta-galactosidase 13 (Oryza sativa subsp. japonica (Rice)).